A 367-amino-acid chain; its full sequence is Prenyltransferase idtC (367 aa).

Positions 1–22 (MTTLAWFAGRSMVLDLAALTSA) are cleaved as a signal peptide. Residues 32–42 (TSTPTSTPTST) are compositionally biased toward low complexity. Positions 32–84 (TSTPTSTPTSTDKAGTPPGSTIHHYGYPQGSVTKPNNSKTEKENGSPKDSKGN) are disordered. An N-linked (GlcNAc...) asparagine glycan is attached at Asn-67. The span at 70 to 82 (KTEKENGSPKDSK) shows a compositional bias: basic and acidic residues. His-132 is a substrate binding site. Mg(2+)-binding residues include Asp-139 and Asp-143. Position 148 (Arg-148) interacts with substrate. N-linked (GlcNAc...) asparagine glycosylation is present at Asn-150. Positions 233, 234, 264, 271, and 281 each coordinate substrate.

It belongs to the FPP/GGPP synthase family. The cofactor is Mg(2+).

Its pathway is secondary metabolite biosynthesis. Its function is as follows. Prenyltransferase; part of the gene cluster that mediates the biosynthesis of paspalitrems, indole-diterpene (IDT) mycotoxins that are potent tremorgens in mammals. The geranylgeranyl diphosphate (GGPP) synthase idtG is proposed to catalyze the first step in IDT biosynthesis via catalysis of a series of iterative condensations of isopentenyl diphosphate (IPP) with dimethylallyl diphosphate (DMAPP), geranyl diphosphate (GPP), and farnesyl diphosphate (FPP), to form GGPP. Condensation of indole-3-glycerol phosphate with GGPP by the prenyltransferase idtC then forms 3-geranylgeranylindole (3-GGI). Epoxidation of the two terminal alkenes of the geranylgeranyl moiety by the FAD-dependent monooxygenase idtM, and cyclization by the terpene cyclase idtB then leads to the production of paspaline. The cytochrome P450 monooxygenase idtP then catalyzes oxidative elimination of the pendant methyl group at C-12 of paspaline and generates the C-10 ketone to yield 13-desoxypaxilline. The cytochrome P450 monooxygenase idtQ may catalyze the C-13 oxidation of 13-desoxypaxilline to afford paxilline. Considering that both paspalicine and paxilline were detected in C.paspali, idtQ also catalyzes the formation of paspalinine from 13-desoxypaxilline via paspalicine as an intermediate. Finally, the alpha-prenyltransferase idtF prenylates paspalinine at the C-20 or the C-21 positions to yield paspalitrems A and C, respectively. The hydroxylation of paspalitrem A at C-32 by a still unknown oxidase affords paspalitrem B. The protein is Prenyltransferase idtC of Claviceps paspali (Rye ergot fungus).